A 574-amino-acid chain; its full sequence is K(+)/H(+) antiporter NhaP2 (574 aa).

Transmembrane regions (helical) follow at residues 6-26, 34-54, 58-78, 87-107, 109-129, 173-193, 196-216, 219-239, 242-262, 271-291, 299-319, 335-355, and 359-379; these read INSFFLIGALLAAVSVLLSPV, ILLIFLAVGILAGEDGPGGIL, YSTAYLVSNLALAIILLDGGM, VALWPALSLATFGVAITTSIT, VMAAWLFDLHWLQGLLVGAIV, IAILANVDAELSVSFMLISFI, FGLGIFLGLGGGWLLWKLVNL, LAEGLYSILVLSGGLMIYAAS, LGGSGILSIYLVGLFLGNKPT, VLDGMTWVSQIGMFLVLGLLL, IWLPGLALAFGMILFARPLAV, WFISWVGLRGAVPIILAVFPM, and LPGAQLYFNLAFFVVLVSLLV. The RCK C-terminal domain occupies 405–486; it reads SGVEIYPSSE…LEALSNLFSQ (82 aa).

Belongs to the monovalent cation:proton antiporter 1 (CPA1) transporter (TC 2.A.36) family. NhaP2 subfamily.

It localises to the cell inner membrane. The catalysed reaction is K(+)(in) + H(+)(out) = K(+)(out) + H(+)(in). K(+)/H(+) antiporter that extrudes potassium in exchange for external protons and maintains the internal concentration of potassium under toxic levels. The chain is K(+)/H(+) antiporter NhaP2 from Shewanella sp. (strain ANA-3).